A 1178-amino-acid polypeptide reads, in one-letter code: Thrombospondin-2 (1178 aa).

Residues 1–22 form the signal peptide; sequence MLQRSRLLWLAVFITLWVSSDA. The Laminin G-like domain maps to 25-221; sequence DAKEEENTFD…LQNIHLIFDT (197 aa). 4 N-linked (GlcNAc...) asparagine glycosylation sites follow: N157, N244, N317, and N322. In terms of domain architecture, VWFC spans 324–381; it reads SVCWQDGRVFADSESWIVDSCTKCTCQDSKIVCHQITCPPVSCADPSFIEGECCPVCS. TSP type-1 domains lie at 387–437, 443–498, and 500–555; these read EEGW…KKCD, DGGW…APCP, and NGQW…RDCP. Cystine bridges form between C399-C431, C403-C436, C414-C421, C455-C492, C459-C497, C470-C482, C512-C549, C516-C554, C527-C539, C559-C570, C564-C580, C583-C594, C600-C616, C607-C625, C628-C652, C658-C671, C665-C684, C686-C697, C713-C721, C726-C746, C762-C782, C785-C805, C821-C841, C844-C864, C882-C902, C918-C938, and C954-C1175. An N-linked (GlcNAc...) asparagine glycan is attached at N463. The EGF-like 1 domain occupies 555 to 595; sequence PIDGCLSNPCFPGAECNSYPDGSWSCGPCPAGFLGNGTVCE. An N-linked (GlcNAc...) asparagine glycan is attached at N590. The 45-residue stretch at 654-698 folds into the EGF-like 2 domain; sequence PENPCKDKTHSCHKSAECIYLGHFSDPMYKCECRTGYAGDGRICG. TSP type-3 repeat units follow at residues 699–734, 735–770, 771–793, 794–829, 830–852, 853–890, 891–926, and 927–962; these read EDSD…NSGQ, EDFD…NPRQ, FDYD…NPAQ, IDTD…NTDQ, SDTD…NPDQ, TDAD…NANQ, ADHD…NPEQ, and EDSD…AISE. N716 is a glycosylation site (N-linked (GlcNAc...) asparagine). The tract at residues 737-760 is disordered; that stretch reads FDKDGKGDACDEDDDNDGVEDDKD. A compositionally biased stretch (acidic residues) spans 746–759; that stretch reads CDEDDDNDGVEDDK. The interval 852–941 is disordered; the sequence is QTDADNDLVG…DGRGDICKDD (90 aa). Residues 853–872 show a composition bias toward acidic residues; sequence TDADNDLVGDQCDNNEDIDE. A compositionally biased stretch (basic and acidic residues) spans 891–901; it reads ADHDKDGKGDA. Residues 902–911 are compositionally biased toward acidic residues; it reads CDPDDDNDGI. Composition is skewed to basic and acidic residues over residues 912 to 924 and 931 to 940; these read PDDR…RYNP and GDGRGDICKD. The short motif at 934 to 936 is the Cell attachment site element; that stretch reads RGD. Residues 966 to 1178 form the TSP C-terminal domain; sequence RKFQMVPLDP…SDLKYECRDA (213 aa). N1075 carries N-linked (GlcNAc...) asparagine glycosylation.

The protein belongs to the thrombospondin family. In terms of assembly, homotrimer; disulfide-linked. Can bind to fibrinogen, fibronectin, laminin and type V collagen.

Functionally, adhesive glycoprotein that mediates cell-to-cell and cell-to-matrix interactions. In Gallus gallus (Chicken), this protein is Thrombospondin-2 (THBS2).